The primary structure comprises 517 residues: Maturase K (517 aa).

This sequence belongs to the intron maturase 2 family. MatK subfamily.

It is found in the plastid. The protein localises to the chloroplast. Usually encoded in the trnK tRNA gene intron. Probably assists in splicing its own and other chloroplast group II introns. This is Maturase K from Palhinhaea cernua (Nodding clubmoss).